The following is a 359-amino-acid chain: Heat-inducible transcription repressor HrcA (359 aa).

It belongs to the HrcA family.

In terms of biological role, negative regulator of class I heat shock genes (grpE-dnaK-dnaJ and groELS operons). Prevents heat-shock induction of these operons. The chain is Heat-inducible transcription repressor HrcA from Rhizobium meliloti (strain 1021) (Ensifer meliloti).